Here is a 343-residue protein sequence, read N- to C-terminus: Mas-related G-protein coupled receptor member F (343 aa).

Over 1–44 (MAGNCSWEAHSTNQNKMCPGMSEALELYSRGFLTIEQIATLPPP) the chain is Extracellular. Asparagine 4 carries an N-linked (GlcNAc...) asparagine glycan. A helical transmembrane segment spans residues 45–66 (AVTNYIFLLLCLCGLVGNGLVL). Topologically, residues 67 to 82 (WFFGFSIKRTPFSIYF) are cytoplasmic. Residues 83–104 (LHLASADGIYLFSKAVIALLNM) traverse the membrane as a helical segment. Over 105 to 123 (GTFLGSFPDYVRRVSRIVG) the chain is Extracellular. The helical transmembrane segment at 124 to 144 (LCTFFAGVSLLPAISIERCVS) threads the bilayer. Over 145–160 (VIFPMWYWRRRPKRLS) the chain is Cytoplasmic. A helical transmembrane segment spans residues 161–181 (AGVCALLWLLSFLVTSIHNYF). Residues 182-198 (CMFLGHEASGTACLNMD) are Extracellular-facing. A helical transmembrane segment spans residues 199–220 (ISLGILLFFLFCPLMVLPCLAL). Residues 221–241 (ILHVECRARRRQRSAKLNHVV) lie on the Cytoplasmic side of the membrane. Residues 242-263 (LAIVSVFLVSSIYLGIDWFLFW) form a helical membrane-spanning segment. Over 264–273 (VFQIPAPFPE) the chain is Extracellular. The helical transmembrane segment at 274 to 294 (YVTDLCICINSSAKPIVYFLA) threads the bilayer. Residues 295–343 (GRDKSQRLWEPLRVVFQRALRDGAEPGDAASSTPNTVTMEMQCPSGNAS) lie on the Cytoplasmic side of the membrane. A disordered region spans residues 318–343 (AEPGDAASSTPNTVTMEMQCPSGNAS). Polar residues predominate over residues 324–343 (ASSTPNTVTMEMQCPSGNAS).

This sequence belongs to the G-protein coupled receptor 1 family. Mas subfamily. As to expression, gut, vas deferens, uterus and aorta; barely detectable in liver, kidney, lung, and salivary gland. In the brain, markedly abundant in the cerebellum.

It localises to the cell membrane. In terms of biological role, orphan receptor. May bind to a neuropeptide and may regulate nociceptor function and/or development, including the sensation or modulation of pain. This Rattus norvegicus (Rat) protein is Mas-related G-protein coupled receptor member F (Mrgprf).